The primary structure comprises 210 residues: 3-oxo-tetronate 4-phosphate decarboxylase (210 aa).

The active-site Proton acceptor is the glutamate 74. Zn(2+) contacts are provided by glutamate 74, histidine 93, and histidine 95. Catalysis depends on tyrosine 120, which acts as the Proton donor. Residue histidine 160 coordinates Zn(2+).

Belongs to the aldolase class II family. AraD/FucA subfamily. Zn(2+) serves as cofactor.

The enzyme catalyses 3-dehydro-4-O-phospho-D-erythronate + H(+) = dihydroxyacetone phosphate + CO2. It catalyses the reaction 3-dehydro-4-O-phospho-L-erythronate + H(+) = dihydroxyacetone phosphate + CO2. Its function is as follows. Catalyzes the decarboxylation of 3-oxo-tetronate 4-phosphate to dihydroxyacetone phosphate (DHAP) and CO(2). The polypeptide is 3-oxo-tetronate 4-phosphate decarboxylase (Haemophilus influenzae (strain ATCC 51907 / DSM 11121 / KW20 / Rd)).